We begin with the raw amino-acid sequence, 40 residues long: Photosystem II reaction center protein Y (40 aa).

A helical membrane pass occupies residues 5-23 (LVLVASPILLAVGWAGFNI).

Belongs to the PsbY family. As to quaternary structure, PSII is composed of 1 copy each of membrane proteins PsbA, PsbB, PsbC, PsbD, PsbE, PsbF, PsbH, PsbI, PsbJ, PsbK, PsbL, PsbM, PsbT, PsbX, PsbY, PsbZ, Psb30/Ycf12, peripheral proteins PsbO, CyanoQ (PsbQ), PsbU, PsbV and a large number of cofactors. It forms dimeric complexes.

It is found in the cellular thylakoid membrane. Its function is as follows. Loosely associated component of the core of photosystem II (PSII), it is not always seen in crystals. PSII is a light-driven water plastoquinone oxidoreductase, using light energy to abstract electrons from H(2)O, generating a proton gradient subsequently used for ATP formation. In Synechococcus sp. (strain RCC307), this protein is Photosystem II reaction center protein Y.